The sequence spans 382 residues: Fimbrial usher domain-containing protein YdeT (382 aa).

The chain is Fimbrial usher domain-containing protein YdeT (ydeT) from Escherichia coli (strain K12).